The chain runs to 488 residues: Glutamyl-tRNA(Gln) amidotransferase subunit A (488 aa).

Residues Lys76 and Ser151 each act as charge relay system in the active site. The active-site Acyl-ester intermediate is the Ser175.

This sequence belongs to the amidase family. GatA subfamily. As to quaternary structure, heterotrimer of A, B and C subunits.

It carries out the reaction L-glutamyl-tRNA(Gln) + L-glutamine + ATP + H2O = L-glutaminyl-tRNA(Gln) + L-glutamate + ADP + phosphate + H(+). Allows the formation of correctly charged Gln-tRNA(Gln) through the transamidation of misacylated Glu-tRNA(Gln) in organisms which lack glutaminyl-tRNA synthetase. The reaction takes place in the presence of glutamine and ATP through an activated gamma-phospho-Glu-tRNA(Gln). This is Glutamyl-tRNA(Gln) amidotransferase subunit A from Symbiobacterium thermophilum (strain DSM 24528 / JCM 14929 / IAM 14863 / T).